A 487-amino-acid polypeptide reads, in one-letter code: MEGAEGSDSCDGIQVLLSREVIDAAPQCPHGPTLLFVKVSQGKEQGRRFYACSACRDRKDCHFFQWEDDKVSQARLAAREEYNKSHQPPMTHAQYVGRFQEFTELPLAKRKFCSDCQQLLLPTNWESHSGHRVLGDISLSQLKRPSQLLHPLENKKANAQYLFAERSCTFLMDTIIALGFRRVLCVGTPRLHELIKLRACEGATPPIKSLLLDIDFRYSQFYWEEEFCHYNMFNHHFFGGEAAKMVCQKFLQEEDGKGALLVTDPPFGGLVEPLAFSFKRLREMWKTTNPENESNLPILWMFPYFFESRILQCFPDFTMLDYQVDYDNHALYKHGKTGRKQSPVRIFTDLPPDKIVLPAIEGYRFCSVCERFVCSGNKHCNICNCCTSKDGRPWKHCTQCNKCVKPSWTHCSACNHCALPDHPCGTAGRGCFLCGGKDHKRRGCPHQSVSAHGKRMENLKQKNIKGSMKKQPIAATSKKRKRKRNNP.

Cys28, His30, Cys52, Cys61, Cys113, Cys116, His128, and His131 together coordinate Zn(2+). The segment at 28–70 (CPHGPTLLFVKVSQGKEQGRRFYACSACRDRKDCHFFQWEDDK) adopts a GRF-type zinc-finger fold. Residues 160-163 (QYLF), Arg190, Asp213, 231-232 (NM), and Asp264 contribute to the S-adenosyl-L-methionine site. The segment at 323–343 (QVDYDNHALYKHGKTGRKQSP) is regulatory loop. The Zn(2+) site is built by Cys366, Cys369, His379, Cys380, Cys383, Cys386, His396, Cys397, Cys400, Cys403, His410, Cys411, Cys414, Cys417, His422, and Cys424. The DHHC domain maps to 381–431 (NICNCCTSKDGRPWKHCTQCNKCVKPSWTHCSACNHCALPDHPCGTAGRGC). The segment at 429-446 (RGCFLCGGKDHKRRGCPH) adopts a CCHC-type zinc-finger fold. The disordered stretch occupies residues 445–487 (PHQSVSAHGKRMENLKQKNIKGSMKKQPIAATSKKRKRKRNNP). A compositionally biased stretch (basic residues) spans 477 to 487 (SKKRKRKRNNP).

It belongs to the ZCCHC4 family.

It is found in the cytoplasm. Its subcellular location is the nucleus. The protein localises to the nucleolus. It catalyses the reaction adenosine(4220) in 28S rRNA + S-adenosyl-L-methionine = N(6)-methyladenosine(4220) in 28S rRNA + S-adenosyl-L-homocysteine + H(+). In terms of biological role, rRNA N6-methyltransferase that specifically methylates the adenine in position 4220 of 28S rRNA. N6-methylation of adenine(4220) in 28S rRNA is required for translation. This Xenopus tropicalis (Western clawed frog) protein is rRNA N(6)-adenosine-methyltransferase ZCCHC4 (zcchc4).